The chain runs to 175 residues: Protein OPG036 (175 aa).

The protein belongs to the poxviridae OPG036 family.

It is found in the host nucleus. Its function is as follows. Plays a role in the inhibition of host innate immune response. Within the host nucleus, inhibits activation of interferon-beta promoter by inhibiting IRF3 activation. The sequence is that of Protein OPG036 (OPG036) from Bos taurus (Bovine).